The chain runs to 1300 residues: Zinc finger protein 536 (1300 aa).

Disordered regions lie at residues 1 to 26 and 47 to 77; these read MEEA…GPVL and FPEL…GQPM. Over residues 48–69 the composition is skewed to basic and acidic residues; sequence PELHPRPNPEEKPPASLEEKAH. 6 C2H2-type zinc fingers span residues 130–152, 158–180, 274–297, 300–323, 345–367, and 373–395; these read YPCP…MRTH, FKCP…LRTH, FRCT…RILH, YKCT…EKAH, FRCE…MRKH, and HCCQ…MKVH. Disordered regions lie at residues 584–604 and 650–739; these read HSTK…LESS and SRVH…QQPA. A compositionally biased stretch (basic and acidic residues) spans 594-604; sequence LPSKLDPLESS. The segment at 631-653 adopts a C2H2-type 7 zinc-finger fold; the sequence is TECPDCGRVFRTYHQVVVHSRVH. Positions 657–674 are enriched in basic and acidic residues; the sequence is RKGEEDGLHVGLDERRGS. Positions 675 to 696 are enriched in polar residues; it reads GSDQESQSVSRSTTPGSSNVTE. 2 C2H2-type zinc fingers span residues 751-773 and 779-801; these read KDCP…LRIH and YKCP…LERH. The segment at 802 to 826 is disordered; that stretch reads HRERQNGAGPLSGQPPNQDHKDEMS. Phosphoserine occurs at positions 826 and 827. The span at 856–880 shows a compositional bias: polar residues; that stretch reads SQQWTSGVLSSGDHSGQATGMSSEV. Disordered regions lie at residues 856–893, 937–985, and 1124–1260; these read SQQW…LPSK, KDKA…PDAA, and SGAS…SLDK. Composition is skewed to basic and acidic residues over residues 950–972 and 1133–1143; these read HGVD…EKSQ and KEPDGKAHSEE. Acidic residues-rich tracts occupy residues 1160-1170 and 1178-1187; these read DLSDIASSEDM and NDEEDVETEP. Residues 1194 to 1209 are compositionally biased toward low complexity; sequence LSALSKDSSSDGGDSL.

Belongs to the krueppel C2H2-type zinc-finger protein family.

It localises to the nucleus. Functionally, transcriptional repressor that negatively regulates neuron differentiation by repressing retinoic acid-induced gene transcription. Binds and interrupts RARA from binding to retinoic acid response elements (RARE) composed of tandem 5'-AGGTCA-3' sites known as DR1-DR5. Recognizes and binds 2 copies of the core DNA sequence 5'-CCCCCA-3'. The chain is Zinc finger protein 536 (ZNF536) from Homo sapiens (Human).